The following is a 649-amino-acid chain: Protein arginine N-methyltransferase 5 (649 aa).

A TIM barrel region spans residues 10-300 (KSESRYCGVE…SPYLDYIAYI (291 aa)). Residues 321–627 (LQSPLQPLMD…CGATKVWYEW (307 aa)) form the SAM-dependent MTase PRMT-type domain. Position 337 (Y337) interacts with S-adenosyl-L-methionine. Residue F340 participates in a protein binding. Residues 346–347 (KY), E405, and 433–434 (DM) each bind S-adenosyl-L-methionine. Residues E449 and E458 each coordinate a protein. Catalysis depends on proton donor/acceptor residues E449 and E458. A beta barrel region spans residues 479-649 (PSSYTSFIEP…SNGRSYWVGL (171 aa)). A dimerization region spans residues 491–507 (ASKLHNDIKAHKDIAHF).

This sequence belongs to the class I-like SAM-binding methyltransferase superfamily. Protein arginine N-methyltransferase family.

It is found in the cytoplasm. The catalysed reaction is L-arginyl-[protein] + 2 S-adenosyl-L-methionine = N(omega),N(omega)'-dimethyl-L-arginyl-[protein] + 2 S-adenosyl-L-homocysteine + 2 H(+). Functionally, methylates arginine residues in proteins such as histone H4. The protein is Protein arginine N-methyltransferase 5 (PRMT5) of Oryza sativa subsp. japonica (Rice).